The following is a 92-amino-acid chain: Small ribosomal subunit protein uS19c (92 aa).

The protein belongs to the universal ribosomal protein uS19 family.

Its subcellular location is the plastid. The protein resides in the chloroplast. In terms of biological role, protein S19 forms a complex with S13 that binds strongly to the 16S ribosomal RNA. This Staurastrum punctulatum (Green alga) protein is Small ribosomal subunit protein uS19c.